Consider the following 215-residue polypeptide: C-type lectin domain family 4 member D (215 aa).

At 1 to 17 (MGLEKPQSKLEGGMHPQ) the chain is on the cytoplasmic side. The chain crosses the membrane as a helical; Signal-anchor for type II membrane protein span at residues 18-38 (LIPSVIAVVFILLLSVCFIAS). At 39–215 (CLVTHHNFSR…ICKIPGTTLN (177 aa)) the chain is on the extracellular side. An N-linked (GlcNAc...) asparagine glycan is attached at Asn-45. An intrachain disulfide couples Cys-84 to Cys-95. The region spanning 91-208 (FQSNCYFPLT…CNFEASRICK (118 aa)) is the C-type lectin domain. 2 N-linked (GlcNAc...) asparagine glycosylation sites follow: Asn-102 and Asn-111. 2 disulfides stabilise this stretch: Cys-112/Cys-207 and Cys-182/Cys-199. Ca(2+)-binding residues include Glu-173, Asp-175, Asn-195, and Asp-196.

Heterodimer with CLEC4E; disulfide-linked. CLEC4E acts as a bridge for interaction between CLEC4D and FCER1G to form a functional complex. Heterodimer with CLEC6A; this heterodimer forms a pattern recognition receptor (PRR) against fungal infection. In terms of tissue distribution, expressed weakly in peripheral blood leukocytes, bone marrow and spleen. Expression is confined mostly in monocytes and macrophage and seems to be up-regulated by IL-6, IL-10, TNF-alpha and IFN-gamma.

It is found in the cell membrane. Calcium-dependent lectin that acts as a pattern recognition receptor (PRR) of the innate immune system: recognizes damage-associated molecular patterns (DAMPs) of pathogen-associated molecular patterns (PAMPs) of bacteria and fungi. The PAMPs include alpha-mannans on C.albicans hypheas and mycobacterial trehalose 6,6'-dimycolate (TDM). Interacts with signaling adapter Fc receptor gamma chain/FCER1G, likely via CLEC4E, to form a functional complex in myeloid cells. Binding of mycobacterial TDM or C.albicans alpha-mannans to this receptor complex leads to phosphorylation of the immunoreceptor tyrosine-based activation motif (ITAM) of FCER1G, triggering activation of SYK, CARD9 and NF-kappa-B, consequently driving maturation of antigen-presenting cells and shaping antigen-specific priming of T-cells toward effector T-helper 1 and T-helper 17 cell subtypes. The heterodimer formed with CLEC6A is active against fungal infection. Functions as an endocytic receptor. May be involved in antigen uptake at the site of infection, either for clearance of the antigen, or for processing and further presentation to T-cells. This chain is C-type lectin domain family 4 member D, found in Homo sapiens (Human).